The sequence spans 339 residues: HTH-type transcriptional regulator KdgR (339 aa).

The HTH lacI-type domain maps to 9 to 64 (TTIKDVAECAGVSKSTVSRYINGKIDAISPEKVKNIKKAIAELNYRPSKMAQGLKI). Positions 11–30 (IKDVAECAGVSKSTVSRYIN) form a DNA-binding region, H-T-H motif.

In terms of biological role, transcriptional repressor of the kdgRKAT and kduID operons for pectin utilization. In Bacillus subtilis (strain 168), this protein is HTH-type transcriptional regulator KdgR (kdgR).